A 538-amino-acid polypeptide reads, in one-letter code: Putative cysteine ligase BshC (538 aa).

A coiled-coil region spans residues 248–268 (ISKYKEVQEGLRNQQEVIKEL).

The protein belongs to the BshC family.

Functionally, involved in bacillithiol (BSH) biosynthesis. May catalyze the last step of the pathway, the addition of cysteine to glucosamine malate (GlcN-Mal) to generate BSH. The protein is Putative cysteine ligase BshC of Bacillus cereus (strain B4264).